We begin with the raw amino-acid sequence, 100 residues long: Small ribosomal subunit protein uS14c (100 aa).

It belongs to the universal ribosomal protein uS14 family. In terms of assembly, part of the 30S ribosomal subunit.

The protein resides in the plastid. Its subcellular location is the chloroplast. In terms of biological role, binds 16S rRNA, required for the assembly of 30S particles. This Oltmannsiellopsis viridis (Marine flagellate) protein is Small ribosomal subunit protein uS14c.